The chain runs to 331 residues: 3'-5' exonuclease (331 aa).

The interval 27–92 (ERVKQTNAAK…EDGPASPEKE (66 aa)) is disordered. A compositionally biased stretch (polar residues) spans 31-43 (QTNAAKKQIATNN). Residues 47–67 (KNQDTPEMIKDKENAESENPP) show a composition bias toward basic and acidic residues. Phosphoserine is present on residues Ser80 and Ser88. The 173-residue stretch at 118 to 290 (SADEVMQWVE…IGQVIYREIE (173 aa)) folds into the 3'-5' exonuclease domain. Mg(2+) contacts are provided by Asp140, Glu142, and Asp278.

Belongs to the WRNexo family.

The protein resides in the nucleus. Functionally, has exonuclease activity on both single-stranded and duplex templates bearing overhangs, but not blunt ended duplex DNA, and cleaves in a 3'-5' direction. Essential for the formation of DNA replication focal centers. Has an important role in maintaining genome stability. This is 3'-5' exonuclease from Drosophila grimshawi (Hawaiian fruit fly).